The sequence spans 457 residues: Argininosuccinate lyase (457 aa).

Belongs to the lyase 1 family. Argininosuccinate lyase subfamily.

It localises to the cytoplasm. The catalysed reaction is 2-(N(omega)-L-arginino)succinate = fumarate + L-arginine. It participates in amino-acid biosynthesis; L-arginine biosynthesis; L-arginine from L-ornithine and carbamoyl phosphate: step 3/3. The polypeptide is Argininosuccinate lyase (Escherichia coli O7:K1 (strain IAI39 / ExPEC)).